The primary structure comprises 681 residues: Methionine--tRNA ligase (681 aa).

The short motif at 14-24 (PYANGSIHLGH) is the 'HIGH' region element. Residues Cys-145, Cys-148, Cys-158, and Cys-161 each coordinate Zn(2+). The 'KMSKS' region motif lies at 331 to 335 (KMSKS). An ATP-binding site is contributed by Lys-334. Positions 579–681 (TFAAVDLRVA…SGAKPGQRIK (103 aa)) constitute a tRNA-binding domain.

It belongs to the class-I aminoacyl-tRNA synthetase family. MetG type 1 subfamily. As to quaternary structure, homodimer. Zn(2+) is required as a cofactor.

Its subcellular location is the cytoplasm. The enzyme catalyses tRNA(Met) + L-methionine + ATP = L-methionyl-tRNA(Met) + AMP + diphosphate. Is required not only for elongation of protein synthesis but also for the initiation of all mRNA translation through initiator tRNA(fMet) aminoacylation. The sequence is that of Methionine--tRNA ligase from Pseudomonas putida (strain W619).